Here is a 414-residue protein sequence, read N- to C-terminus: uncharacterized protein (414 aa).

It belongs to the glycosyltransferase 28 family.

This is an uncharacterized protein from Mycobacterium tuberculosis (strain CDC 1551 / Oshkosh).